A 60-amino-acid chain; its full sequence is Putative mercuric resistance protein (60 aa).

This Pseudomonas aeruginosa protein is Putative mercuric resistance protein.